Here is a 212-residue protein sequence, read N- to C-terminus: Redox-sensing transcriptional repressor Rex (212 aa).

Residues 17–56 (KYHRYLQELMENDIDRISSKELSEKIGFTASQIRQDLNCF) constitute a DNA-binding region (H-T-H motif). 91-96 (GAGNIG) provides a ligand contact to NAD(+).

This sequence belongs to the transcriptional regulatory Rex family. In terms of assembly, homodimer.

It is found in the cytoplasm. In terms of biological role, modulates transcription in response to changes in cellular NADH/NAD(+) redox state. The polypeptide is Redox-sensing transcriptional repressor Rex (Clostridium perfringens (strain SM101 / Type A)).